The sequence spans 115 residues: MKLSKKQARLRRATKFRAKHAQGSTKRLCVHKTAQHIYAQIISPCGTKVLASASTLTAKLKNGGNVDAATKVGKEIAKAATSVKVIKVAFDRSGFKYHGRVKALADAAREGGLDF.

Belongs to the universal ribosomal protein uL18 family. Part of the 50S ribosomal subunit; part of the 5S rRNA/L5/L18/L25 subcomplex. Contacts the 5S and 23S rRNAs.

This is one of the proteins that bind and probably mediate the attachment of the 5S RNA into the large ribosomal subunit, where it forms part of the central protuberance. In Ruthia magnifica subsp. Calyptogena magnifica, this protein is Large ribosomal subunit protein uL18.